We begin with the raw amino-acid sequence, 739 residues long: Phosphoribosylformylglycinamidine synthase subunit PurL (739 aa).

The active site involves histidine 54. The ATP site is built by tyrosine 57 and lysine 96. Glutamate 98 is a binding site for Mg(2+). Residues 99–102 and arginine 121 each bind substrate; that span reads SHNH. Histidine 100 serves as the catalytic Proton acceptor. Residue aspartate 122 participates in Mg(2+) binding. Glutamine 245 contributes to the substrate binding site. Position 273 (aspartate 273) interacts with Mg(2+). A substrate-binding site is contributed by 317–319; the sequence is ESQ. ATP is bound by residues aspartate 500 and glycine 537. A Mg(2+)-binding site is contributed by asparagine 538. Serine 540 is a substrate binding site.

Belongs to the FGAMS family. As to quaternary structure, monomer. Part of the FGAM synthase complex composed of 1 PurL, 1 PurQ and 2 PurS subunits.

It localises to the cytoplasm. It catalyses the reaction N(2)-formyl-N(1)-(5-phospho-beta-D-ribosyl)glycinamide + L-glutamine + ATP + H2O = 2-formamido-N(1)-(5-O-phospho-beta-D-ribosyl)acetamidine + L-glutamate + ADP + phosphate + H(+). The protein operates within purine metabolism; IMP biosynthesis via de novo pathway; 5-amino-1-(5-phospho-D-ribosyl)imidazole from N(2)-formyl-N(1)-(5-phospho-D-ribosyl)glycinamide: step 1/2. In terms of biological role, part of the phosphoribosylformylglycinamidine synthase complex involved in the purines biosynthetic pathway. Catalyzes the ATP-dependent conversion of formylglycinamide ribonucleotide (FGAR) and glutamine to yield formylglycinamidine ribonucleotide (FGAM) and glutamate. The FGAM synthase complex is composed of three subunits. PurQ produces an ammonia molecule by converting glutamine to glutamate. PurL transfers the ammonia molecule to FGAR to form FGAM in an ATP-dependent manner. PurS interacts with PurQ and PurL and is thought to assist in the transfer of the ammonia molecule from PurQ to PurL. In Bacillus cereus (strain Q1), this protein is Phosphoribosylformylglycinamidine synthase subunit PurL.